The following is a 1562-amino-acid chain: MKVKKTYGFRKSKISKTLCGAVLGTVAAVSVAGQKVFADETTTTSDVDTKVVGTQTGNPATNLPEAQGSASKEAEQSQNQAGETNGSIPVEVPKTDLDQAAKDAKSAGVNVVQDADVNKGTVKTAEEAVQKETEIKEDYTKQAEDIKKTTDQYKSDVAAHEAEVAKIKAKNQATKEQYEKDMAAHKAEVERINAANAASKTAYEAKLAQYQADLAAVQKTNAANQAAYQKALAAYQAELKRVQEANAAAKAAYDTAVAANNAKNTEIAAANEEIRKRNATAKAEYETKLAQYQAELKRVQEANAANEADYQAKLTAYQTELARVQKANADAKAAYEAAVAANNAKNAALTAENTAIKQRNENAKATYEAALKQYEADLAAVKKANAANEADYQAKLTAYQTELARVQKANADAKAAYEAAVAANNAANAALTAENTAIKKRNADAKADYEAKLAKYQADLAKYQKDLADYPVKLKAYEDEQASIKAALAELEKHKNEDGNLTEPSAQNLVYDLEPNANLSLTTDGKFLKASAVDDAFSKSTSKAKYDQKILQLDDLDITNLEQSNDVASSMELYGNFGDKAGWSTTVSNNSQVKWGSVLLERGQSATATYTNLQNSYYNGKKISKIVYKYTVDPKSKFQGQKVWLGIFTDPTLGVFASAYTGQVEKNTSIFIKNEFTFYDEDGKPINFDNALLSVASLNRENNSIEMAKDYTGKFVKISGSSIGEKNGMIYATDTLNFRQGQGGARWTMYTRASEPGSGWDSSDAPNSWYGAGAIRMSGPNNSVTLGAISSTLVVPADPTMAIETGKKPNIWYSLNGKIRAVNVPKVTKEKPTPPVKPTAPTKPTYETEKPLKPAPVAPNYEKEPTPPTRTPDQAEPNKPTPPTYETEKPLEPAPVEPSYEAEPTPPTRTPDQAEPNKPTPPTYETEKPLEPAPVEPSYEAEPTPPTPTPDQPEPNKPVEPTYEVIPTPPTDPVYQDLPTPPSVPTVHFHYFKLAVQPQVNKEIRNNNDINIDRTLVAKQSVVKFQLKTADLPAGRDETTSFVLVDPLPSGYQFNPEATKAASPGFDVTYDNATNTVTFKATAATLATFNADLTKSVATIYPTVVGQVLNDGATYKNNFTLTVNDAYGIKSNVVRVTTPGKPNDPDNPNNNYIKPTKVNKNENGVVIDGKTVLAGSTNYYELTWDLDQYKNDRSSADTIQKGFYYVDDYPEEALELRQDLVKITDANGNEVTGVSVDNYTNLEAAPQEIRDVLSKAGIRPKGAFQIFRADNPREFYDTYVKTGIDLKIVSPMVVKKQMGQTGGSYENQAYQIDFGNGYASNIIINNVPKINPKKDVTLTLDPADTNNVDGQTIPLNTVFNYRLIGGIIPADHSEELFEYNFYDDYDQTGDHYTGQYKVFAKVDITFKDGSIIKSGAELTQYTTAEVDTAKGAITIKFKEAFLRSVSIDSAFQAESYIQMKRIAVGTFENTYINTVNGVTYSSNTVKTTTPEDPTDPTDPQDPSSPRTSTVINYKPQSTAYQPSSVQETLPNTGVTNNAYMPLLGIIGLVTSFSLLGLKAKKD.

Positions 1–38 (MKVKKTYGFRKSKISKTLCGAVLGTVAAVSVAGQKVFA) are cleaved as a signal peptide. The span at 42–54 (TTTSDVDTKVVGT) shows a compositional bias: low complexity. The interval 42 to 91 (TTTSDVDTKVVGTQTGNPATNLPEAQGSASKEAEQSQNQAGETNGSIPVE) is disordered. The interval 60–551 (ATNLPEAQGS…SKAKYDQKIL (492 aa)) is helical. A compositionally biased stretch (polar residues) spans 76-87 (QSQNQAGETNGS). Ag I/II A repeat units follow at residues 147-221 (KKTT…QKTN), 222-303 (AANQ…QEAN), 304-385 (AANE…KKAN), and 386-467 (AANE…QKDL). Disordered stretches follow at residues 824-973 (VPKV…PTDP) and 1482-1509 (SNTV…RTST). Residues 943–958 (PTPPTPTPDQPEPNKP) are compositionally biased toward pro residues. A compositionally biased stretch (low complexity) spans 1500-1509 (QDPSSPRTST). An LPXTG sorting signal motif is present at residues 1529-1533 (LPNTG). Pentaglycyl murein peptidoglycan amidated threonine is present on T1532. The propeptide at 1533–1562 (GVTNNAYMPLLGIIGLVTSFSLLGLKAKKD) is removed by sortase.

The protein belongs to the antigen I/II family. Detected as a 185 kDa cell surface protein, but also as 2 proteins in S.mutans culture supernatants of about 150 kDa (antigen I) and 50 kDa (antigen II); antigen II is only seen after proteolysis. Antigen I and II have the same N-terminus but different C-termini.

The protein resides in the secreted. The protein localises to the cell wall. Functionally, surface protein antigen implicated in dental caries. The sequence is that of Cell surface antigen I/II from Streptococcus mutans serotype c (strain ATCC 700610 / UA159).